Reading from the N-terminus, the 130-residue chain is Small ribosomal subunit protein uS9 (130 aa).

This sequence belongs to the universal ribosomal protein uS9 family.

In Syntrophobacter fumaroxidans (strain DSM 10017 / MPOB), this protein is Small ribosomal subunit protein uS9.